Here is a 349-residue protein sequence, read N- to C-terminus: 2-oxoglutarate and iron-dependent oxygenase domain-containing protein 2 (349 aa).

The region spanning 214-308 (DSHRAFVVKY…RWNLVVWLRA (95 aa)) is the Fe2OG dioxygenase domain. Fe cation is bound by residues His-234, Asp-236, and His-289. Residue Arg-299 participates in 2-oxoglutarate binding.

The protein belongs to the OGFOD2 family. The cofactor is Fe(2+). L-ascorbate is required as a cofactor.

The sequence is that of 2-oxoglutarate and iron-dependent oxygenase domain-containing protein 2 (Ogfod2) from Mus musculus (Mouse).